We begin with the raw amino-acid sequence, 877 residues long: G-protein coupled receptor family C group 6 member A (877 aa).

The first 24 residues, 1-24, serve as a signal peptide directing secretion; the sequence is MAGLDLSLVLMLSVLAGVREVSLT. Topologically, residues 25 to 567 are extracellular; sequence QVNQQGVIAP…EYFEWNSGFA (543 aa). N-linked (GlcNAc...) asparagine glycosylation is found at N53, N99, N135, N263, N310, N322, N338, and N358. An L-lysine-binding site is contributed by D388. Residues N430, N475, N484, N528, and N548 are each glycosylated (N-linked (GlcNAc...) asparagine). A helical transmembrane segment spans residues 568-588; it reads IALLTLAALGILLLISMSALF. Topologically, residues 589–603 are cytoplasmic; sequence FWQRNSLVVKAAGGP. Residues 604–624 traverse the membrane as a helical segment; the sequence is LCHLILFSLLGSFISVIFFVG. The Extracellular segment spans residues 625 to 635; it reads EPSNESCRVRQ. A glycan (N-linked (GlcNAc...) asparagine) is linked at N628. The chain crosses the membrane as a helical span at residues 636–656; it reads VIFGLSFTLCVSCILVKSLKI. Residues 657 to 676 are Cytoplasmic-facing; sequence LLAFQMNLELKELLRKLYKP. Residues 677-697 form a helical membrane-spanning segment; that stretch reads YVIVCMCMGLQVTICTLWLTL. Topologically, residues 698-720 are extracellular; it reads HRPFIEKVVQPKSILLECNEGSD. A helical transmembrane segment spans residues 721–741; the sequence is LMFGLMLGYIVLLALICFTFA. Topologically, residues 742–755 are cytoplasmic; the sequence is YKGRKLPQKYNEAK. A helical membrane pass occupies residues 756-776; the sequence is FITFGMLIYLMAWVIFIPVHV. The Extracellular portion of the chain corresponds to 777 to 782; that stretch reads TTSGKY. The helical transmembrane segment at 783 to 803 threads the bilayer; that stretch reads VPAVEVVVILISNYGILSCHF. Over 804–877 the chain is Cytoplasmic; it reads LPKCYIIIFK…VSVPEIDNVL (74 aa).

The protein belongs to the G-protein coupled receptor 3 family. In terms of assembly, homodimer; disulfide-linked. Expressed in olfactory epithelium. Also expressed in gills, tongue, lips and palatal organ. Not expressed in brain, kidney, liver, muscle, intestine, ovary and skin. In olfactory epithelium, it is widely expressed over the apical and medial portions of the olfactory sensory neurons, regions that contain olfactory neurons. Expressed in external epithelia, which contains taste buds and solitary chemosensory cells. On gill rakers, it is widely expressed in the surface epithelium, but excluded from taste buds.

The protein localises to the cell membrane. In terms of biological role, olfactory receptor that is activated by amino acids that act as potent odorants in fish. Most highly activated by basic amino acids such as L-lysine and L-arginine. This Carassius auratus (Goldfish) protein is G-protein coupled receptor family C group 6 member A (gprc6a).